The following is a 337-amino-acid chain: Casein kinase I isoform alpha-like (337 aa).

The residue at position 8 (lysine 8) is an N6-acetyllysine. A Protein kinase domain is found at 17–285; that stretch reads YKLVRKIGSG…YLRQLFRILF (269 aa). ATP contacts are provided by residues 23–31 and lysine 46; that span reads IGSGSFGDV. The active-site Proton acceptor is the aspartate 136. Residues 309–325 are compositionally biased toward low complexity; it reads AASSSGQGQQAQTQTGK. The segment at 309-337 is disordered; that stretch reads AASSSGQGQQAQTQTGKQTEKNKNNVKDN. The segment covering 326–337 has biased composition (basic and acidic residues); the sequence is QTEKNKNNVKDN.

It belongs to the protein kinase superfamily. CK1 Ser/Thr protein kinase family. Casein kinase I subfamily. In terms of assembly, interacts with FAM83A, FAM83B, FAM83C, FAM83D, FAM83E, FAM83F, FAM83G and FAM83H (via DUF1669).

The protein localises to the cytoplasm. The enzyme catalyses L-seryl-[protein] + ATP = O-phospho-L-seryl-[protein] + ADP + H(+). It carries out the reaction L-threonyl-[protein] + ATP = O-phospho-L-threonyl-[protein] + ADP + H(+). In terms of biological role, casein kinases are operationally defined by their preferential utilization of acidic proteins such as caseins as substrates. It can phosphorylate a large number of proteins. Participates in Wnt signaling. This Homo sapiens (Human) protein is Casein kinase I isoform alpha-like (CSNK1A1L).